Reading from the N-terminus, the 112-residue chain is Protein SMALL AUXIN UP-REGULATED RNA 10 (112 aa).

The protein belongs to the ARG7 family. Confined to the veins and petioles of rosette leaves and cauline leaves, and specifically expressed at the abaxial side of inflorescence branche; relocates to both the adaxial (Ad) and abaxial (Ab) sides of the branch in reduced red:far-red (R:FR) light, during shade. Also present in flowers.

The protein resides in the cell membrane. In terms of biological role, provide a mechanistic link between auxin and plasma membrane H(+)-ATPases (PM H(+)-ATPases, e.g. AHA1 and AHA2), and triggers PM H(+)-ATPases activity by promoting phosphorylation of their C-terminal autoinhibitory domain as a result of PP2C-D subfamily of type 2C phosphatases inhibition, thus leading to the acidification of the apoplast and the facilitation of solutes and water uptake to drive cell expansion. Triggers plant growth probably by promoting cell elongation. Regulates branch angles and bending. In Arabidopsis thaliana (Mouse-ear cress), this protein is Protein SMALL AUXIN UP-REGULATED RNA 10.